Here is a 166-residue protein sequence, read N- to C-terminus: MANVEAQTGELIEKLITVNRVAKVVKGGRIFSFTALTVVGDGKGKVGFGYGKAREVPAAIQKAMEKARRNMVTVQLKGDTLQHPVKGRHSGSQVYMQPASEGTGIIAGGAMRAVLEVSGVHNVLSKAYGSTNPINVVRATIKALNGMKSPEQVAAKRGLRVDEILG.

The S5 DRBM domain occupies Leu-11–Val-74.

The protein belongs to the universal ribosomal protein uS5 family. Part of the 30S ribosomal subunit. Contacts proteins S4 and S8.

Functionally, with S4 and S12 plays an important role in translational accuracy. Located at the back of the 30S subunit body where it stabilizes the conformation of the head with respect to the body. The sequence is that of Small ribosomal subunit protein uS5 from Idiomarina loihiensis (strain ATCC BAA-735 / DSM 15497 / L2-TR).